The chain runs to 196 residues: dTTP/UTP pyrophosphatase (196 aa).

Residue aspartate 76 is the Proton acceptor of the active site.

It belongs to the Maf family. YhdE subfamily. Requires a divalent metal cation as cofactor.

The protein localises to the cytoplasm. It carries out the reaction dTTP + H2O = dTMP + diphosphate + H(+). It catalyses the reaction UTP + H2O = UMP + diphosphate + H(+). Nucleoside triphosphate pyrophosphatase that hydrolyzes dTTP and UTP. May have a dual role in cell division arrest and in preventing the incorporation of modified nucleotides into cellular nucleic acids. The protein is dTTP/UTP pyrophosphatase of Chlorobium chlorochromatii (strain CaD3).